We begin with the raw amino-acid sequence, 188 residues long: Elongation factor P (188 aa).

This sequence belongs to the elongation factor P family.

It is found in the cytoplasm. It participates in protein biosynthesis; polypeptide chain elongation. Its function is as follows. Involved in peptide bond synthesis. Stimulates efficient translation and peptide-bond synthesis on native or reconstituted 70S ribosomes in vitro. Probably functions indirectly by altering the affinity of the ribosome for aminoacyl-tRNA, thus increasing their reactivity as acceptors for peptidyl transferase. The protein is Elongation factor P of Rickettsia africae (strain ESF-5).